The following is a 214-amino-acid chain: Adenylate kinase (214 aa).

ATP is bound at residue 10 to 15 (GGGKGT). The tract at residues 30–59 (STGDMFRENVKGGTELGLKAKEYMDAGQLV) is NMP. AMP contacts are provided by residues Thr31, Arg36, 57 to 59 (QLV), 85 to 88 (GFPR), and Gln92. An LID region spans residues 126-163 (GRRVCRVCGATFHVLFNAPKEDGKCDKCGGELYQRSDD). An ATP-binding site is contributed by Arg127. Zn(2+)-binding residues include Cys130 and Cys133. 136-137 (TF) serves as a coordination point for ATP. Zn(2+) is bound by residues Cys150 and Cys153. Residues Arg160 and Arg171 each coordinate AMP. Gln199 serves as a coordination point for ATP.

This sequence belongs to the adenylate kinase family. As to quaternary structure, monomer.

Its subcellular location is the cytoplasm. It catalyses the reaction AMP + ATP = 2 ADP. Its pathway is purine metabolism; AMP biosynthesis via salvage pathway; AMP from ADP: step 1/1. Its function is as follows. Catalyzes the reversible transfer of the terminal phosphate group between ATP and AMP. Plays an important role in cellular energy homeostasis and in adenine nucleotide metabolism. This Desulforudis audaxviator (strain MP104C) protein is Adenylate kinase.